The primary structure comprises 184 residues: Spiro-conjugate synthase (184 aa).

Cys57 and Cys184 are joined by a disulfide. Gln115 provides a ligand contact to (1S,3R,6R,8R,9R,11R,14S,15S,19R,20R)-8-ethyl-9,15-dihydroxy-3,4,6,20-tetramethyl-21,23-dioxo-24-azapentacyclo[20.2.1.0(1,6).0(11,20).0(14,19)]pentacosa-4,12,22(25)-trien-25-olate.

Homodimer.

The catalysed reaction is 4-[(1R,2R,4aS,5S,8aR)-2-[(2R,3R,5E,7E)-3-ethyl-2-hydroxy-5,7-dimethylnona-5,7-dien-1-yl]-5-hydroxy-1-methyl-1,2,4a,5,6,7,8,8a-octahydronaphthalene-1-carbonyl]-2-methylidene-5-oxo-2,5-dihydro-1H-pyrrol-3-olate = (1S,3R,6R,8R,9R,11R,14S,15S,19R,20R)-8-ethyl-9,15-dihydroxy-3,4,6,20-tetramethyl-21,23-dioxo-24-azapentacyclo[20.2.1.0(1,6).0(11,20).0(14,19)]pentacosa-4,12,22(25)-trien-25-olate. It functions in the pathway antibiotic biosynthesis. Functionally, involved in the biosynthesis of the spirotetramate antibiotics pyrroindomycins. Catalyzes the intramolecular cyclization forming the spiro-conjugate moiety in pyrroindomycins, via an exo-selective [4+2] cycloaddition reaction. This chain is Spiro-conjugate synthase, found in Streptomyces rugosporus.